A 466-amino-acid chain; its full sequence is MLLGGPPRSPRSGTSPKGPWSSTGHVQFGKSPQTWPRRTRPRSPEPAAPSGVRGSTWTRRRDSPRRAGPTALSRYVGHLWMGRRPPSPEARGPVPRSSAASRARRSLASPGISPGPLTATIGGAVAGGGPRQGRAEAHKEVFPGQRVGKMAAPMELFCWSGGWGLPSVDLDSLAVLTYARFTGAPLKVHKISNPWQSPSGTLPALRTSHGEVISVPHKIITHLRKEKYNADYDLSARQGADTLAFMSLLEEKLLPVLVHTFWIDTKNYVEVTRKWYAEAMPFPLNFFLPGRMQRQYMERLQLLTGEHRPEDEEELEKELYREARECLTLLSQRLGSQKFFFGDAPASLDAFVFSYLALLLQAKLPSGKLQVHLRGLHNLCAYCTHILSLYFPWDGAEVPPQRQTPAGPETEEEPYRRRNQILSVLAGLAAMVGYALLSGIVSIQRATPARAPGTRTLGMAEEDEEE.

Residues 1 to 19 (MLLGGPPRSPRSGTSPKGP) show a composition bias toward low complexity. Residues 1–133 (MLLGGPPRSP…AVAGGGPRQG (133 aa)) are disordered. Residues 20–36 (WSSTGHVQFGKSPQTWP) are compositionally biased toward polar residues. The segment covering 90 to 110 (ARGPVPRSSAASRARRSLASP) has biased composition (low complexity). Residues Lys187, Lys190, Lys227, and Lys317 each participate in a glycyl lysine isopeptide (Lys-Gly) (interchain with G-Cter in ubiquitin) cross-link. The chain crosses the membrane as a helical span at residues 421 to 441 (ILSVLAGLAAMVGYALLSGIV).

This sequence belongs to the metaxin family. In terms of assembly, interacts with MTX2/metaxin-2. Associates with the mitochondrial contact site and cristae organizing system (MICOS) complex, composed of at least MICOS10/MIC10, CHCHD3/MIC19, CHCHD6/MIC25, APOOL/MIC27, IMMT/MIC60, APOO/MIC23/MIC26 and QIL1/MIC13. This complex was also known under the names MINOS or MitOS complex. The MICOS complex associates with mitochondrial outer membrane proteins SAMM50, MTX1 and MTX2 (together described as components of the mitochondrial outer membrane sorting assembly machinery (SAM) complex) and DNAJC11, mitochondrial inner membrane protein TMEM11 and with HSPA9. The MICOS and SAM complexes together with DNAJC11 are part of a large protein complex spanning both membranes termed the mitochondrial intermembrane space bridging (MIB) complex. Interacts with ARMC1. Post-translationally, ubiquitinated by PRKN during mitophagy, leading to its degradation and enhancement of mitophagy. Deubiquitinated by USP30.

Its subcellular location is the membrane. It localises to the mitochondrion outer membrane. Its function is as follows. Involved in transport of proteins into the mitochondrion. Essential for embryonic development. The polypeptide is Metaxin-1 (MTX1) (Homo sapiens (Human)).